Here is a 264-residue protein sequence, read N- to C-terminus: Thymidylate synthase (264 aa).

Position 21 (Arg-21) interacts with dUMP. His-51 is a (6R)-5,10-methylene-5,6,7,8-tetrahydrofolate binding site. Position 126-127 (126-127 (RR)) interacts with dUMP. Cys-146 serves as the catalytic Nucleophile. DUMP-binding positions include 166 to 169 (RSCD), Asn-177, and 207 to 209 (HLY). Residue Asp-169 coordinates (6R)-5,10-methylene-5,6,7,8-tetrahydrofolate. (6R)-5,10-methylene-5,6,7,8-tetrahydrofolate is bound at residue Ala-263.

Belongs to the thymidylate synthase family. Bacterial-type ThyA subfamily. Homodimer.

It is found in the cytoplasm. It carries out the reaction dUMP + (6R)-5,10-methylene-5,6,7,8-tetrahydrofolate = 7,8-dihydrofolate + dTMP. It functions in the pathway pyrimidine metabolism; dTTP biosynthesis. Its function is as follows. Catalyzes the reductive methylation of 2'-deoxyuridine-5'-monophosphate (dUMP) to 2'-deoxythymidine-5'-monophosphate (dTMP) while utilizing 5,10-methylenetetrahydrofolate (mTHF) as the methyl donor and reductant in the reaction, yielding dihydrofolate (DHF) as a by-product. This enzymatic reaction provides an intracellular de novo source of dTMP, an essential precursor for DNA biosynthesis. This Shewanella oneidensis (strain ATCC 700550 / JCM 31522 / CIP 106686 / LMG 19005 / NCIMB 14063 / MR-1) protein is Thymidylate synthase.